A 216-amino-acid polypeptide reads, in one-letter code: Sperm microtubule inner protein 8 (216 aa).

Microtubule inner protein component of sperm flagellar doublet microtubules.

The protein resides in the cytoplasm. Its subcellular location is the cytoskeleton. It is found in the flagellum axoneme. Its function is as follows. Microtubule inner protein (MIP) part of the dynein-decorated doublet microtubules (DMTs) in flagellum axoneme. May serve to reinforce and thus stabilize the microtubule structure in the sperm flagella. This Rattus norvegicus (Rat) protein is Sperm microtubule inner protein 8 (Spmip8).